We begin with the raw amino-acid sequence, 273 residues long: Transposable element Tcb1 transposase (273 aa).

This sequence belongs to the transposase 5 family.

The protein resides in the nucleus. In terms of biological role, probably essential for transposable element Tcb1 transposition. The insertion of Tcb1 is the main cause of spontaneous mutations. The protein is Transposable element Tcb1 transposase of Caenorhabditis briggsae.